The chain runs to 350 residues: Phenylalanine--tRNA ligase alpha subunit (350 aa).

Glu-259 serves as a coordination point for Mg(2+).

It belongs to the class-II aminoacyl-tRNA synthetase family. Phe-tRNA synthetase alpha subunit type 1 subfamily. In terms of assembly, tetramer of two alpha and two beta subunits. Requires Mg(2+) as cofactor.

It is found in the cytoplasm. The enzyme catalyses tRNA(Phe) + L-phenylalanine + ATP = L-phenylalanyl-tRNA(Phe) + AMP + diphosphate + H(+). The chain is Phenylalanine--tRNA ligase alpha subunit (pheS) from Rickettsia prowazekii (strain Madrid E).